A 636-amino-acid polypeptide reads, in one-letter code: uncharacterized protein (636 aa).

A run of 3 helical transmembrane segments spans residues 12–32 (AVIYAALILILLFVYGIFGSI), 34–54 (IMHLGVIDAIYYTITTVTTTG), and 75–95 (IGAGFLLYIFTLMLSVMFMSF). Residues 112–231 (KNHFILCGFG…KKAGANRIIS (120 aa)) enclose the RCK N-terminal domain.

The protein localises to the cell membrane. This is an uncharacterized protein from Methanothermus fervidus (strain ATCC 43054 / DSM 2088 / JCM 10308 / V24 S).